The primary structure comprises 449 residues: Maltoporin (449 aa).

Residues 1-24 form the signal peptide; sequence MITLRKLPLAVAVAAGVMSAQAMA.

It belongs to the porin LamB (TC 1.B.3) family. As to quaternary structure, homotrimer formed of three 18-stranded antiparallel beta-barrels, containing three independent channels.

The protein resides in the cell outer membrane. The enzyme catalyses beta-maltose(in) = beta-maltose(out). Involved in the transport of maltose and maltodextrins. This Citrobacter koseri (strain ATCC BAA-895 / CDC 4225-83 / SGSC4696) protein is Maltoporin.